The following is a 200-amino-acid chain: Recoverin (200 aa).

The N-myristoyl glycine moiety is linked to residue Gly-2. 4 consecutive EF-hand domains span residues 25–60, 61–96, 97–132, and 147–182; these read EEEL…FPDT, DPKA…TTAG, KTNQ…IFKM, and TPEK…NKEI. Position 39 is a cysteine sulfenic acid (-SOH) (Cys-39). Residues Asp-74, Asn-76, Asp-78, Thr-80, Glu-85, Asp-110, Asp-112, Asn-114, Thr-116, and Glu-121 each contribute to the Ca(2+) site. An interaction with GRK1 region spans residues 189–192; it reads EPQK.

It belongs to the recoverin family. As to quaternary structure, homodimer; disulfide-linked. Homodimerization is caused by prolonged intense illumination. May form a complex composed of RHO, GRK1 and RCVRN in a Ca(2+)-dependent manner; RCVRN prevents the interaction between GRK1 and RHO. Interacts (via C-terminus) with GRK1 (via N-terminus); the interaction is Ca(2+)-dependent. In terms of processing, the N-terminal glycine is linked to one of four different types of acyl groups. The most abundant is myristoleate (14:1), but 14:0, 14:2, and 12:0 acyl residues are also present. The Ca(2+) induced exposure of the myristoyl group, known as the calcium-myristoyl switch, promotes RCVRN binding to the photoreceptor cell membranes only when intracellular Ca(2+) concentration is high. Oxidation on Cys-39 occurs in response to prolonged intense illumination and results in the formation of disulfide homodimers, and to a lesser extent disulfide-linked heterodimers. As to expression, retina and pineal gland.

It is found in the photoreceptor inner segment. The protein resides in the cell projection. Its subcellular location is the cilium. The protein localises to the photoreceptor outer segment. It localises to the photoreceptor outer segment membrane. It is found in the perikaryon. Its function is as follows. Acts as a calcium sensor and regulates phototransduction of cone and rod photoreceptor cells. Modulates light sensitivity of cone photoreceptor in dark and dim conditions. In response to high Ca(2+) levels induced by low light levels, prolongs RHO/rhodopsin activation in rod photoreceptor cells by binding to and inhibiting GRK1-mediated phosphorylation of RHO/rhodopsin. Plays a role in scotopic vision/enhances vision in dim light by enhancing signal transfer between rod photoreceptors and rod bipolar cells. Improves rod photoreceptor sensitivity in dim light and mediates response of rod photoreceptors to facilitate detection of change and motion in bright light. In Homo sapiens (Human), this protein is Recoverin (RCVRN).